The sequence spans 222 residues: MKNLAIFDLDNTLINTDSDHAWPQYLIKKGLVDAAETEAQNEKFYRDYQNGCLDIDAFLKFHLAPLARYSKEELAEFHREFMAEYIIPHISPMQRMLVQSHQMAGDETLVISSTNEFIITPVCHLFGITNIIGTQLETGSDGRYTGNYIGTPSLKEGKITRLNQWLAERGETLQSYGKTYFYSDSKNDLPLLRLVSEPVAVNPDAELEKEAKEKGWPVLNFK.

Catalysis depends on Asp-8, which acts as the Nucleophile. Residues Asp-8, Asp-10, and Asp-184 each coordinate Mg(2+). The Proton donor role is filled by Asp-10.

The protein belongs to the HAD-like hydrolase superfamily. SerB family. Requires Mg(2+) as cofactor.

It carries out the reaction L-histidinol phosphate + H2O = L-histidinol + phosphate. It participates in amino-acid biosynthesis; L-histidine biosynthesis; L-histidine from 5-phospho-alpha-D-ribose 1-diphosphate: step 8/9. In terms of biological role, catalyzes the dephosphorylation of histidinol-phosphate to histidinol, the direct precursor of histidine. This Neisseria meningitidis serogroup C (strain 8013) protein is Histidinol-phosphatase.